The following is a 232-amino-acid chain: tRNA (guanine-N(7)-)-methyltransferase (232 aa).

Glu-63, Glu-88, Asp-115, and Asp-137 together coordinate S-adenosyl-L-methionine. Asp-137 is an active-site residue. Substrate is bound by residues Lys-141, Asp-173, and 211–214 (TRYE).

Belongs to the class I-like SAM-binding methyltransferase superfamily. TrmB family.

The enzyme catalyses guanosine(46) in tRNA + S-adenosyl-L-methionine = N(7)-methylguanosine(46) in tRNA + S-adenosyl-L-homocysteine. It participates in tRNA modification; N(7)-methylguanine-tRNA biosynthesis. Its function is as follows. Catalyzes the formation of N(7)-methylguanine at position 46 (m7G46) in tRNA. The sequence is that of tRNA (guanine-N(7)-)-methyltransferase from Chelativorans sp. (strain BNC1).